The primary structure comprises 137 residues: Cellular retinoic acid-binding protein 1 (137 aa).

The Nuclear localization signal signature appears at 21–31 (KALGVNAMLRK). 132–134 (RIY) is an all-trans-retinoate binding site.

This sequence belongs to the calycin superfamily. Fatty-acid binding protein (FABP) family.

The protein localises to the cytoplasm. Its function is as follows. Cytosolic CRABPs may regulate the access of retinoic acid to the nuclear retinoic acid receptors. This chain is Cellular retinoic acid-binding protein 1 (CRABP1), found in Gallus gallus (Chicken).